A 344-amino-acid chain; its full sequence is Protein MENT (344 aa).

The first 22 residues, methionine 1–glycine 22, serve as a signal peptide directing secretion. Positions aspartate 162–glutamine 182 are enriched in polar residues. The disordered stretch occupies residues aspartate 162–serine 197.

In terms of processing, phosphorylation sites are present in the extracellular medium.

It localises to the secreted. Functionally, involved in control of cellular proliferation. Onconcogenic modifier contributing to the tumor suppressor function of DNMT3B. This chain is Protein MENT (Ment), found in Rattus norvegicus (Rat).